The chain runs to 395 residues: Chorismate synthase (395 aa).

Arg40 and Arg46 together coordinate NADP(+). Residues 137–139 (RSS), Gly308, 323–327 (KPLPT), and Arg349 each bind FMN.

This sequence belongs to the chorismate synthase family. In terms of assembly, homotetramer. FMNH2 is required as a cofactor.

It catalyses the reaction 5-O-(1-carboxyvinyl)-3-phosphoshikimate = chorismate + phosphate. Its pathway is metabolic intermediate biosynthesis; chorismate biosynthesis; chorismate from D-erythrose 4-phosphate and phosphoenolpyruvate: step 7/7. Catalyzes the anti-1,4-elimination of the C-3 phosphate and the C-6 proR hydrogen from 5-enolpyruvylshikimate-3-phosphate (EPSP) to yield chorismate, which is the branch point compound that serves as the starting substrate for the three terminal pathways of aromatic amino acid biosynthesis. This reaction introduces a second double bond into the aromatic ring system. In Gloeobacter violaceus (strain ATCC 29082 / PCC 7421), this protein is Chorismate synthase.